We begin with the raw amino-acid sequence, 104 residues long: Large ribosomal subunit protein bL21 (104 aa).

The protein belongs to the bacterial ribosomal protein bL21 family. Part of the 50S ribosomal subunit. Contacts protein L20.

This protein binds to 23S rRNA in the presence of protein L20. The polypeptide is Large ribosomal subunit protein bL21 (Clostridium botulinum (strain ATCC 19397 / Type A)).